A 264-amino-acid polypeptide reads, in one-letter code: Regulatory protein RecX (264 aa).

Belongs to the RecX family.

Its subcellular location is the cytoplasm. Negatively modulates RecA activity. In Bacillus subtilis (strain 168), this protein is Regulatory protein RecX.